The primary structure comprises 258 residues: Imidazole glycerol phosphate synthase subunit HisF (258 aa).

Catalysis depends on residues D12 and D131.

It belongs to the HisA/HisF family. Heterodimer of HisH and HisF.

The protein localises to the cytoplasm. The catalysed reaction is 5-[(5-phospho-1-deoxy-D-ribulos-1-ylimino)methylamino]-1-(5-phospho-beta-D-ribosyl)imidazole-4-carboxamide + L-glutamine = D-erythro-1-(imidazol-4-yl)glycerol 3-phosphate + 5-amino-1-(5-phospho-beta-D-ribosyl)imidazole-4-carboxamide + L-glutamate + H(+). It participates in amino-acid biosynthesis; L-histidine biosynthesis; L-histidine from 5-phospho-alpha-D-ribose 1-diphosphate: step 5/9. In terms of biological role, IGPS catalyzes the conversion of PRFAR and glutamine to IGP, AICAR and glutamate. The HisF subunit catalyzes the cyclization activity that produces IGP and AICAR from PRFAR using the ammonia provided by the HisH subunit. This Nocardioides sp. (strain ATCC BAA-499 / JS614) protein is Imidazole glycerol phosphate synthase subunit HisF.